The following is a 97-amino-acid chain: uncharacterized protein (97 aa).

This is an uncharacterized protein from Schizosaccharomyces pombe (strain 972 / ATCC 24843) (Fission yeast).